A 375-amino-acid chain; its full sequence is Carbamoyl phosphate synthase small chain (375 aa).

Residues 1–184 (MVSLYLENGL…LDYKPFDEKT (184 aa)) form a CPSase region. L-glutamine contacts are provided by serine 44, glycine 240, and glycine 242. Positions 188-375 (IIAVLDFGAK…KEFVELLKDF (188 aa)) constitute a Glutamine amidotransferase type-1 domain. Catalysis depends on cysteine 268, which acts as the Nucleophile. L-glutamine contacts are provided by leucine 269, glutamine 272, asparagine 310, and tyrosine 313. Active-site residues include histidine 351 and glutamate 353.

Belongs to the CarA family. In terms of assembly, composed of two chains; the small (or glutamine) chain promotes the hydrolysis of glutamine to ammonia, which is used by the large (or ammonia) chain to synthesize carbamoyl phosphate. Tetramer of heterodimers (alpha,beta)4.

The catalysed reaction is hydrogencarbonate + L-glutamine + 2 ATP + H2O = carbamoyl phosphate + L-glutamate + 2 ADP + phosphate + 2 H(+). The enzyme catalyses L-glutamine + H2O = L-glutamate + NH4(+). It participates in amino-acid biosynthesis; L-arginine biosynthesis; carbamoyl phosphate from bicarbonate: step 1/1. Its pathway is pyrimidine metabolism; UMP biosynthesis via de novo pathway; (S)-dihydroorotate from bicarbonate: step 1/3. Small subunit of the glutamine-dependent carbamoyl phosphate synthetase (CPSase). CPSase catalyzes the formation of carbamoyl phosphate from the ammonia moiety of glutamine, carbonate, and phosphate donated by ATP, constituting the first step of 2 biosynthetic pathways, one leading to arginine and/or urea and the other to pyrimidine nucleotides. The small subunit (glutamine amidotransferase) binds and cleaves glutamine to supply the large subunit with the substrate ammonia. The protein is Carbamoyl phosphate synthase small chain of Helicobacter pylori (strain ATCC 700392 / 26695) (Campylobacter pylori).